The sequence spans 135 residues: S-protein homolog 7 (135 aa).

Positions 1–20 (MNNLFVLVIIIVLSAGSNNG) are cleaved as a signal peptide.

It belongs to the plant self-incompatibility (S1) protein family.

Its subcellular location is the secreted. The sequence is that of S-protein homolog 7 from Arabidopsis thaliana (Mouse-ear cress).